Reading from the N-terminus, the 406-residue chain is Bifunctional enzyme IspD/IspF (406 aa).

Residues 1–247 are 2-C-methyl-D-erythritol 4-phosphate cytidylyltransferase; sequence MSLIRVNGEA…TLFFNPAKDT (247 aa). The segment at 248 to 406 is 2-C-methyl-D-erythritol 2,4-cyclodiphosphate synthase; the sequence is FIGMGFDTHA…HVSMRYKQKL (159 aa). A divalent metal cation is bound by residues Asp-254 and His-256. 4-CDP-2-C-methyl-D-erythritol 2-phosphate is bound by residues 254–256 and 280–281; these read DTH and HS. Position 288 (His-288) interacts with a divalent metal cation. 4-CDP-2-C-methyl-D-erythritol 2-phosphate is bound by residues 302-304, 307-311, 378-381, Phe-385, and Lys-388; these read DIG, FPDND, and TTME.

It in the N-terminal section; belongs to the IspD/TarI cytidylyltransferase family. IspD subfamily. In the C-terminal section; belongs to the IspF family. The cofactor is a divalent metal cation.

It catalyses the reaction 2-C-methyl-D-erythritol 4-phosphate + CTP + H(+) = 4-CDP-2-C-methyl-D-erythritol + diphosphate. The enzyme catalyses 4-CDP-2-C-methyl-D-erythritol 2-phosphate = 2-C-methyl-D-erythritol 2,4-cyclic diphosphate + CMP. The protein operates within isoprenoid biosynthesis; isopentenyl diphosphate biosynthesis via DXP pathway; isopentenyl diphosphate from 1-deoxy-D-xylulose 5-phosphate: step 2/6. It functions in the pathway isoprenoid biosynthesis; isopentenyl diphosphate biosynthesis via DXP pathway; isopentenyl diphosphate from 1-deoxy-D-xylulose 5-phosphate: step 4/6. Its function is as follows. Bifunctional enzyme that catalyzes the formation of 4-diphosphocytidyl-2-C-methyl-D-erythritol from CTP and 2-C-methyl-D-erythritol 4-phosphate (MEP) (IspD), and catalyzes the conversion of 4-diphosphocytidyl-2-C-methyl-D-erythritol 2-phosphate (CDP-ME2P) to 2-C-methyl-D-erythritol 2,4-cyclodiphosphate (ME-CPP) with a corresponding release of cytidine 5-monophosphate (CMP) (IspF). In Helicobacter pylori (strain ATCC 700392 / 26695) (Campylobacter pylori), this protein is Bifunctional enzyme IspD/IspF.